The chain runs to 423 residues: UDP-N-acetylglucosamine 1-carboxyvinyltransferase 2 (423 aa).

A phosphoenolpyruvate-binding site is contributed by Lys23–Asn24. UDP-N-acetyl-alpha-D-glucosamine is bound at residue Arg96. The Proton donor role is filled by Cys120. Residue Cys120 is modified to 2-(S-cysteinyl)pyruvic acid O-phosphothioketal. UDP-N-acetyl-alpha-D-glucosamine is bound by residues Arg125–Leu129, Asp309, and Val331.

The protein belongs to the EPSP synthase family. MurA subfamily.

Its subcellular location is the cytoplasm. It carries out the reaction phosphoenolpyruvate + UDP-N-acetyl-alpha-D-glucosamine = UDP-N-acetyl-3-O-(1-carboxyvinyl)-alpha-D-glucosamine + phosphate. Its pathway is cell wall biogenesis; peptidoglycan biosynthesis. Functionally, cell wall formation. Adds enolpyruvyl to UDP-N-acetylglucosamine. This chain is UDP-N-acetylglucosamine 1-carboxyvinyltransferase 2, found in Streptococcus agalactiae serotype III (strain NEM316).